The chain runs to 460 residues: Argininosuccinate lyase (460 aa).

The protein belongs to the lyase 1 family. Argininosuccinate lyase subfamily.

It is found in the cytoplasm. It carries out the reaction 2-(N(omega)-L-arginino)succinate = fumarate + L-arginine. It participates in amino-acid biosynthesis; L-arginine biosynthesis; L-arginine from L-ornithine and carbamoyl phosphate: step 3/3. This is Argininosuccinate lyase from Alteromonas mediterranea (strain DSM 17117 / CIP 110805 / LMG 28347 / Deep ecotype).